The following is a 429-amino-acid chain: Gamma-glutamyl phosphate reductase (429 aa).

Belongs to the gamma-glutamyl phosphate reductase family.

Its subcellular location is the cytoplasm. It catalyses the reaction L-glutamate 5-semialdehyde + phosphate + NADP(+) = L-glutamyl 5-phosphate + NADPH + H(+). It functions in the pathway amino-acid biosynthesis; L-proline biosynthesis; L-glutamate 5-semialdehyde from L-glutamate: step 2/2. Catalyzes the NADPH-dependent reduction of L-glutamate 5-phosphate into L-glutamate 5-semialdehyde and phosphate. The product spontaneously undergoes cyclization to form 1-pyrroline-5-carboxylate. This is Gamma-glutamyl phosphate reductase from Bradyrhizobium sp. (strain ORS 278).